Consider the following 183-residue polypeptide: Segregation and condensation protein B (183 aa).

Belongs to the ScpB family. Homodimer. Homodimerization may be required to stabilize the binding of ScpA to the Smc head domains. Component of a cohesin-like complex composed of ScpA, ScpB and the Smc homodimer, in which ScpA and ScpB bind to the head domain of Smc. The presence of the three proteins is required for the association of the complex with DNA.

Its subcellular location is the cytoplasm. In terms of biological role, participates in chromosomal partition during cell division. May act via the formation of a condensin-like complex containing Smc and ScpA that pull DNA away from mid-cell into both cell halves. The chain is Segregation and condensation protein B from Streptococcus pyogenes serotype M12 (strain MGAS2096).